The primary structure comprises 88 residues: Probable Fe(2+)-trafficking protein (88 aa).

Belongs to the Fe(2+)-trafficking protein family.

Functionally, could be a mediator in iron transactions between iron acquisition and iron-requiring processes, such as synthesis and/or repair of Fe-S clusters in biosynthetic enzymes. The sequence is that of Probable Fe(2+)-trafficking protein from Teredinibacter turnerae (strain ATCC 39867 / T7901).